The chain runs to 58 residues: Ribosome modulation factor (58 aa).

This sequence belongs to the ribosome modulation factor family.

Its subcellular location is the cytoplasm. Functionally, during stationary phase, converts 70S ribosomes to an inactive dimeric form (100S ribosomes). In Tolumonas auensis (strain DSM 9187 / NBRC 110442 / TA 4), this protein is Ribosome modulation factor.